The following is a 347-amino-acid chain: S-adenosylmethionine:tRNA ribosyltransferase-isomerase (347 aa).

This sequence belongs to the QueA family. As to quaternary structure, monomer.

It localises to the cytoplasm. The enzyme catalyses 7-aminomethyl-7-carbaguanosine(34) in tRNA + S-adenosyl-L-methionine = epoxyqueuosine(34) in tRNA + adenine + L-methionine + 2 H(+). The protein operates within tRNA modification; tRNA-queuosine biosynthesis. Functionally, transfers and isomerizes the ribose moiety from AdoMet to the 7-aminomethyl group of 7-deazaguanine (preQ1-tRNA) to give epoxyqueuosine (oQ-tRNA). The protein is S-adenosylmethionine:tRNA ribosyltransferase-isomerase of Exiguobacterium sibiricum (strain DSM 17290 / CCUG 55495 / CIP 109462 / JCM 13490 / 255-15).